The primary structure comprises 453 residues: Bifunctional protein GlmU (453 aa).

The pyrophosphorylase stretch occupies residues Met-1–Arg-226. Residues Leu-7–Gly-10, Lys-21, Gln-72, Gly-77–Thr-78, Tyr-99–Asp-101, Gly-136, Glu-151, Asn-166, and Asn-224 contribute to the UDP-N-acetyl-alpha-D-glucosamine site. Residue Asp-101 participates in Mg(2+) binding. Asn-224 is a Mg(2+) binding site. The tract at residues Gln-227 to Ala-247 is linker. The N-acetyltransferase stretch occupies residues Gly-248–Ser-453. Positions 330 and 348 each coordinate UDP-N-acetyl-alpha-D-glucosamine. His-360 serves as the catalytic Proton acceptor. Positions 363 and 374 each coordinate UDP-N-acetyl-alpha-D-glucosamine. Acetyl-CoA-binding positions include Ala-377, Asn-383 to Tyr-384, Ser-402, Ala-420, and Arg-437.

This sequence in the N-terminal section; belongs to the N-acetylglucosamine-1-phosphate uridyltransferase family. The protein in the C-terminal section; belongs to the transferase hexapeptide repeat family. As to quaternary structure, homotrimer. Mg(2+) is required as a cofactor.

It is found in the cytoplasm. It carries out the reaction alpha-D-glucosamine 1-phosphate + acetyl-CoA = N-acetyl-alpha-D-glucosamine 1-phosphate + CoA + H(+). The catalysed reaction is N-acetyl-alpha-D-glucosamine 1-phosphate + UTP + H(+) = UDP-N-acetyl-alpha-D-glucosamine + diphosphate. The protein operates within nucleotide-sugar biosynthesis; UDP-N-acetyl-alpha-D-glucosamine biosynthesis; N-acetyl-alpha-D-glucosamine 1-phosphate from alpha-D-glucosamine 6-phosphate (route II): step 2/2. It participates in nucleotide-sugar biosynthesis; UDP-N-acetyl-alpha-D-glucosamine biosynthesis; UDP-N-acetyl-alpha-D-glucosamine from N-acetyl-alpha-D-glucosamine 1-phosphate: step 1/1. It functions in the pathway bacterial outer membrane biogenesis; LPS lipid A biosynthesis. In terms of biological role, catalyzes the last two sequential reactions in the de novo biosynthetic pathway for UDP-N-acetylglucosamine (UDP-GlcNAc). The C-terminal domain catalyzes the transfer of acetyl group from acetyl coenzyme A to glucosamine-1-phosphate (GlcN-1-P) to produce N-acetylglucosamine-1-phosphate (GlcNAc-1-P), which is converted into UDP-GlcNAc by the transfer of uridine 5-monophosphate (from uridine 5-triphosphate), a reaction catalyzed by the N-terminal domain. The chain is Bifunctional protein GlmU from Cellvibrio japonicus (strain Ueda107) (Pseudomonas fluorescens subsp. cellulosa).